We begin with the raw amino-acid sequence, 397 residues long: UDP-GlcNAc:betaGal beta-1,3-N-acetylglucosaminyltransferase 7 (397 aa).

Residues 1-6 (MSLWKK) are Cytoplasmic-facing. Residues 7–26 (TLYKSVCLALALLVAVTVFQ) form a helical membrane-spanning segment. At 27-397 (RSVTPGQFLQ…LTCSVKFQVL (371 aa)) the chain is on the lumenal side. 4 N-linked (GlcNAc...) asparagine glycosylation sites follow: Asn-84, Asn-90, Asn-210, and Asn-387.

This sequence belongs to the glycosyltransferase 31 family. In terms of tissue distribution, strongly expressed in placenta and colon. Moderately expressed in lung, stomach, small intestine and kidney. Very weakly expressed in cerebrum, cerebellum, heart and testis.

The protein localises to the golgi apparatus membrane. It participates in protein modification; protein glycosylation. Functionally, N-acetyl glucosamine (GlcNAc) transferase that catalyzes the transfer of GlcNAc via a beta1-&gt;3 linkage from UDP-GlcNAc to the non-reducing terminal galactose (Gal) in the linearly growing chain of N- and O-linked keratan sulfate proteoglycans. Cooperates with B4GALT4 galactosyltransferase and CHST6 and CHST1 sulfotransferases to construct and elongate mono- and disulfated disaccharide units [-&gt;3Galbeta1-&gt;4(6-sulfoGlcNAcbeta)1-&gt;] and [-&gt;3(6-sulfoGalbeta)1-&gt;4(6-sulfoGlcNAcbeta)1-&gt;] within keratan sulfate polymer. Involved in biosynthesis of N-linked keratan sulfate proteoglycans in cornea, with an impact on proteoglycan fibril organization and corneal transparency. May play a role in the maintenance of tissue architecture by suppressing cellular motility and invasion. The chain is UDP-GlcNAc:betaGal beta-1,3-N-acetylglucosaminyltransferase 7 (B3gnt7) from Mus musculus (Mouse).